The primary structure comprises 134 residues: ATP synthase epsilon chain (134 aa).

Basic and acidic residues predominate over residues 94–104; it reads AKLAKSRAESH. A disordered region spans residues 94 to 115; it reads AKLAKSRAESHLEEDDDNTDIN.

Belongs to the ATPase epsilon chain family. F-type ATPases have 2 components, CF(1) - the catalytic core - and CF(0) - the membrane proton channel. CF(1) has five subunits: alpha(3), beta(3), gamma(1), delta(1), epsilon(1). CF(0) has three main subunits: a, b and c.

It localises to the cell membrane. In terms of biological role, produces ATP from ADP in the presence of a proton gradient across the membrane. This is ATP synthase epsilon chain from Staphylococcus epidermidis (strain ATCC 35984 / DSM 28319 / BCRC 17069 / CCUG 31568 / BM 3577 / RP62A).